The chain runs to 62 residues: Large ribosomal subunit protein uL29 (62 aa).

Belongs to the universal ribosomal protein uL29 family.

The chain is Large ribosomal subunit protein uL29 from Geotalea daltonii (strain DSM 22248 / JCM 15807 / FRC-32) (Geobacter daltonii).